Consider the following 194-residue polypeptide: Cysteine and glycine-rich protein 3 (194 aa).

The interval 1-5 is interaction with TCAP; it reads MPNWG. In terms of domain architecture, LIM zinc-binding 1 spans 10–61; that stretch reads CGACEKTVYHAEEIQCNGRSFHKTCFHCMACRKALDSTTVAAHESEIYCKVC. The short motif at 64 to 69 is the Nuclear localization signal element; it reads RRYGPK. Residues 94 to 106 are interaction with CLF2; the sequence is QSPKQARSATTSS. Serine 95 and serine 153 each carry phosphoserine. The LIM zinc-binding 2 domain maps to 120–171; that stretch reads CPRCGKSVYAAEKVMGGGKPWHKTCFRCAICGKSLESTNVTDKDGELYCKVC.

Self-associates. Oligomeric in the cytoplasm and monomeric in the nucleus. Homooligomers preferentially form along the actin cytoskeleton. Interacts with TCAP, LDHD, MYOD1, MYOG, ACTN2, NRAP, MYF6. Interacts (via N-terminus) with GLRX3 (via C-terminus) and PPP3CA; GLRX3 and calcineurin compete for interaction with CSRP3. Interacts with CFL2; the stoichiometry influences F-actin depolymerization and possibly two molecules of CFL2 can interact with one molecule of CSRP3 resulting in the highest functional impact; the interaction is stronger with phosphorylated CFL2.

The protein localises to the nucleus. The protein resides in the cytoplasm. It localises to the cytoskeleton. Its subcellular location is the myofibril. It is found in the sarcomere. The protein localises to the z line. Functionally, positive regulator of myogenesis. Acts as a cofactor for myogenic bHLH transcription factors such as MYOD1, and probably MYOG and MYF6. Enhances the DNA-binding activity of the MYOD1:TCF3 isoform E47 complex and may promote formation of a functional MYOD1:TCF3 isoform E47:MEF2A complex involved in myogenesis. Plays a crucial and specific role in the organization of cytosolic structures in cardiomyocytes. Could play a role in mechanical stretch sensing. May be a scaffold protein that promotes the assembly of interacting proteins at Z-line structures. It is essential for calcineurin anchorage to the Z line. Required for stress-induced calcineurin-NFAT activation. The role in regulation of cytoskeleton dynamics by association with CFL2 is reported conflictingly. Proposed to contribute to the maintenance of muscle cell integrity through an actin-based mechanism. Can directly bind to actin filaments, cross-link actin filaments into bundles without polarity selectivity and protect them from dilution- and cofilin-mediated depolymerization; the function seems to involve its self-association. In vitro can inhibit PKC/PRKCA activity. Proposed to be involved in cardiac stress signaling by down-regulating excessive PKC/PRKCA signaling. This chain is Cysteine and glycine-rich protein 3 (CSRP3), found in Bos taurus (Bovine).